Here is a 162-residue protein sequence, read N- to C-terminus: Meiosis-specific protein HED1 (162 aa).

The disordered stretch occupies residues 67–124; that stretch reads KNLSENTGGGSPNGGAYLDAKKGVREQDQYQGGPSKELDRLQPPPSMKKSPPRKKKSL. Residues 85 to 94 are compositionally biased toward basic and acidic residues; that stretch reads DAKKGVREQD.

In terms of assembly, interacts with RAD51.

The protein resides in the nucleus. The protein localises to the chromosome. Involved in regulation of meiotic recombination and repair of DNA damage. Inhibits RAD51-mediated recombination when the meiotic recombination machinery is impaired. The sequence is that of Meiosis-specific protein HED1 (HED1) from Saccharomyces cerevisiae (strain ATCC 204508 / S288c) (Baker's yeast).